The primary structure comprises 495 residues: Ectonucleoside triphosphate diphosphohydrolase 8 (495 aa).

Over 1–8 (MGLSRKEQ) the chain is Cytoplasmic. A helical transmembrane segment spans residues 9–29 (VFLALLGASGVSGLTALILLL). Topologically, residues 30–471 (VEATSVLLPT…AESYGVWVAK (442 aa)) are extracellular. N-linked (GlcNAc...) asparagine glycosylation is present at asparagine 67. A disulfide bridge connects residues cysteine 78 and cysteine 102. The active-site Proton acceptor is the glutamate 168. A disulfide bond links cysteine 246 and cysteine 292. Asparagine 304 carries an N-linked (GlcNAc...) asparagine glycan. A disulfide bridge links cysteine 329 with cysteine 335. The N-linked (GlcNAc...) asparagine glycan is linked to asparagine 363. Residues cysteine 381 and cysteine 403 are joined by a disulfide bond. A helical transmembrane segment spans residues 472–492 (VVFMVLALVAVVGAALVQLFW). The Cytoplasmic segment spans residues 493–495 (LQD).

The protein belongs to the GDA1/CD39 NTPase family. Requires Ca(2+) as cofactor. Mg(2+) is required as a cofactor. In terms of processing, N-glycosylated.

Its subcellular location is the cell membrane. The enzyme catalyses a ribonucleoside 5'-triphosphate + 2 H2O = a ribonucleoside 5'-phosphate + 2 phosphate + 2 H(+). Its activity is regulated as follows. Not inhibited by ARL 67156. Functionally, canalicular ectonucleoside NTPDase responsible for the main hepatic NTPDase activity. Ectonucleoside NTPDases catalyze the hydrolysis of gamma- and beta-phosphate residues of nucleotides, playing a central role in concentration of extracellular nucleotides. Has activity toward ATP, ADP, UTP and UDP, but not toward AMP. The protein is Ectonucleoside triphosphate diphosphohydrolase 8 (ENTPD8) of Homo sapiens (Human).